We begin with the raw amino-acid sequence, 268 residues long: Orotidine 5'-phosphate decarboxylase (268 aa).

Substrate is bound by residues D39, 61–63 (KTH), 93–102 (DRKFADIGNT), Y219, and R237. The active-site Proton donor is K95.

This sequence belongs to the OMP decarboxylase family.

The enzyme catalyses orotidine 5'-phosphate + H(+) = UMP + CO2. The protein operates within pyrimidine metabolism; UMP biosynthesis via de novo pathway; UMP from orotate: step 2/2. In Pachysolen tannophilus (Yeast), this protein is Orotidine 5'-phosphate decarboxylase (URA3).